We begin with the raw amino-acid sequence, 183 residues long: ATP synthase subunit delta (183 aa).

It belongs to the ATPase delta chain family. As to quaternary structure, F-type ATPases have 2 components, F(1) - the catalytic core - and F(0) - the membrane proton channel. F(1) has five subunits: alpha(3), beta(3), gamma(1), delta(1), epsilon(1). F(0) has three main subunits: a(1), b(2) and c(10-14). The alpha and beta chains form an alternating ring which encloses part of the gamma chain. F(1) is attached to F(0) by a central stalk formed by the gamma and epsilon chains, while a peripheral stalk is formed by the delta and b chains.

The protein localises to the cell inner membrane. Functionally, f(1)F(0) ATP synthase produces ATP from ADP in the presence of a proton or sodium gradient. F-type ATPases consist of two structural domains, F(1) containing the extramembraneous catalytic core and F(0) containing the membrane proton channel, linked together by a central stalk and a peripheral stalk. During catalysis, ATP synthesis in the catalytic domain of F(1) is coupled via a rotary mechanism of the central stalk subunits to proton translocation. In terms of biological role, this protein is part of the stalk that links CF(0) to CF(1). It either transmits conformational changes from CF(0) to CF(1) or is implicated in proton conduction. In Chloroherpeton thalassium (strain ATCC 35110 / GB-78), this protein is ATP synthase subunit delta.